A 134-amino-acid polypeptide reads, in one-letter code: Bradykinin-related peptides (134 aa).

Positions 1–22 are cleaved as a signal peptide; the sequence is MAFLKKSLFLVLFLGVVSLSFC. Propeptides lie at residues 23-44, 71-82, and 99-121; these read EEEK…ESLG, RSISGLTPIRLS, and ISEA…PLRG. The span at 24–33 shows a compositional bias: basic and acidic residues; it reads EEKREEHEEE. Residues 24–71 form a disordered region; that stretch reads EEKREEHEEEKRDEEDAESLGKRYGGLSPLRISKRVPPGFTPFRSPAR. Proline 126 carries the post-translational modification 4-hydroxyproline; partial; in form [Hyp3]-bradykinin and [Hyp3]-bradykinin-Val,Asp.

It belongs to the frog skin active peptide (FSAP) family. Bradykinin-related peptide subfamily. Expressed by the skin glands. Expression levels in inguinal glands are much higher than in granular glands.

The protein localises to the secreted. In terms of biological role, may produce in vitro relaxation of rat arterial smooth muscle and constriction of intestinal smooth muscle. May target bradykinin receptors (BDKRB). This chain is Bradykinin-related peptides, found in Physalaemus nattereri (Cuyaba dwarf frog).